The following is a 450-amino-acid chain: Phosphoglucosamine mutase (450 aa).

The active-site Phosphoserine intermediate is the Ser-104. Ser-104, Asp-241, Asp-243, and Asp-245 together coordinate Mg(2+). Ser-104 is subject to Phosphoserine.

The protein belongs to the phosphohexose mutase family. Mg(2+) is required as a cofactor. In terms of processing, activated by phosphorylation.

It catalyses the reaction alpha-D-glucosamine 1-phosphate = D-glucosamine 6-phosphate. Catalyzes the conversion of glucosamine-6-phosphate to glucosamine-1-phosphate. The polypeptide is Phosphoglucosamine mutase (Renibacterium salmoninarum (strain ATCC 33209 / DSM 20767 / JCM 11484 / NBRC 15589 / NCIMB 2235)).